A 121-amino-acid chain; its full sequence is Large ribosomal subunit protein uL14c (121 aa).

It belongs to the universal ribosomal protein uL14 family. As to quaternary structure, part of the 50S ribosomal subunit.

The protein localises to the plastid. It localises to the chloroplast. Its function is as follows. Binds to 23S rRNA. The sequence is that of Large ribosomal subunit protein uL14c from Euglena gracilis.